A 70-amino-acid chain; its full sequence is Sec-independent protein translocase protein TatA (70 aa).

A helical transmembrane segment spans residues 1–21 (MFGLGGQELILILLIILLLFG). The span at 50 to 62 (FNKVVDEPPRKTP) shows a compositional bias: basic and acidic residues. A disordered region spans residues 50–70 (FNKVVDEPPRKTPENSTGSKS).

This sequence belongs to the TatA/E family. Forms a complex with TatC.

Its subcellular location is the cell inner membrane. Functionally, part of the twin-arginine translocation (Tat) system that transports large folded proteins containing a characteristic twin-arginine motif in their signal peptide across membranes. TatA could form the protein-conducting channel of the Tat system. The polypeptide is Sec-independent protein translocase protein TatA (Chlorobium limicola (strain DSM 245 / NBRC 103803 / 6330)).